A 285-amino-acid chain; its full sequence is Probable endonuclease 4 (285 aa).

Zn(2+) is bound by residues histidine 67, histidine 107, glutamate 144, aspartate 177, histidine 180, histidine 214, aspartate 227, histidine 229, and glutamate 259.

This sequence belongs to the AP endonuclease 2 family. Zn(2+) serves as cofactor.

The enzyme catalyses Endonucleolytic cleavage to 5'-phosphooligonucleotide end-products.. Functionally, endonuclease IV plays a role in DNA repair. It cleaves phosphodiester bonds at apurinic or apyrimidinic (AP) sites, generating a 3'-hydroxyl group and a 5'-terminal sugar phosphate. In Persephonella marina (strain DSM 14350 / EX-H1), this protein is Probable endonuclease 4.